The chain runs to 124 residues: Small ribosomal subunit protein uS12 (124 aa).

Aspartate 90 is modified (3-methylthioaspartic acid).

This sequence belongs to the universal ribosomal protein uS12 family. Part of the 30S ribosomal subunit. Contacts proteins S8 and S17. May interact with IF1 in the 30S initiation complex.

In terms of biological role, with S4 and S5 plays an important role in translational accuracy. Functionally, interacts with and stabilizes bases of the 16S rRNA that are involved in tRNA selection in the A site and with the mRNA backbone. Located at the interface of the 30S and 50S subunits, it traverses the body of the 30S subunit contacting proteins on the other side and probably holding the rRNA structure together. The combined cluster of proteins S8, S12 and S17 appears to hold together the shoulder and platform of the 30S subunit. This Wolbachia sp. subsp. Brugia malayi (strain TRS) protein is Small ribosomal subunit protein uS12.